Reading from the N-terminus, the 170-residue chain is Phosphopantetheine adenylyltransferase (170 aa).

T10 contacts substrate. Residues 10–11 (TF) and H18 each bind ATP. The substrate site is built by K42, V79, and R93. ATP contacts are provided by residues 94-96 (GLR), E104, and 129-135 (TQFISST).

This sequence belongs to the bacterial CoaD family. In terms of assembly, homohexamer. It depends on Mg(2+) as a cofactor.

Its subcellular location is the cytoplasm. It carries out the reaction (R)-4'-phosphopantetheine + ATP + H(+) = 3'-dephospho-CoA + diphosphate. It functions in the pathway cofactor biosynthesis; coenzyme A biosynthesis; CoA from (R)-pantothenate: step 4/5. Functionally, reversibly transfers an adenylyl group from ATP to 4'-phosphopantetheine, yielding dephospho-CoA (dPCoA) and pyrophosphate. The chain is Phosphopantetheine adenylyltransferase from Parvibaculum lavamentivorans (strain DS-1 / DSM 13023 / NCIMB 13966).